Reading from the N-terminus, the 267-residue chain is tRNA pseudouridine synthase A (267 aa).

The active-site Nucleophile is the aspartate 53. Tyrosine 114 serves as a coordination point for substrate.

It belongs to the tRNA pseudouridine synthase TruA family. In terms of assembly, homodimer.

It catalyses the reaction uridine(38/39/40) in tRNA = pseudouridine(38/39/40) in tRNA. Formation of pseudouridine at positions 38, 39 and 40 in the anticodon stem and loop of transfer RNAs. The sequence is that of tRNA pseudouridine synthase A from Chlamydia muridarum (strain MoPn / Nigg).